The following is a 336-amino-acid chain: E3 ubiquitin-protein ligase RING2 (336 aa).

Residues 2 to 179 (TQTVQTNGVQ…AEDNGDSSHC (178 aa)) form an interaction with HIP2 region. The RING-type zinc-finger motif lies at 51-91 (CPICLDMLKNTMTTKECLHRFCADCIITALRSGNKECPTCR). The segment at 93–98 (KLVSKR) is interaction with nucleosomes via an acidic patch on histone H2A and histone H2B. The segment at 158 to 218 (RGKKHQIENG…NATENGGGDI (61 aa)) is disordered. Positions 176 to 190 (SSHCSNASVHSNQEA) are enriched in polar residues.

Component of chromatin-associated Polycomb (PcG) complexes. Component of a PRC1-like complex. Component of some MLL1/MLL complex.

It is found in the nucleus. The protein resides in the cytoplasm. It localises to the chromosome. The catalysed reaction is S-ubiquitinyl-[E2 ubiquitin-conjugating enzyme]-L-cysteine + [acceptor protein]-L-lysine = [E2 ubiquitin-conjugating enzyme]-L-cysteine + N(6)-ubiquitinyl-[acceptor protein]-L-lysine.. It participates in protein modification; protein ubiquitination. Its function is as follows. E3 ubiquitin-protein ligase that mediates monoubiquitination of 'Lys-119' of histone H2A (H2AK119Ub), thereby playing a central role in histone code and gene regulation. H2AK119Ub gives a specific tag for epigenetic transcriptional repression. Essential component of a Polycomb group (PcG) multiprotein PRC1-like complex, a complex class required to maintain the transcriptionally repressive state of many genes, including Hox genes, throughout development. PcG PRC1 complex acts via chromatin remodeling and modification of histones, rendering chromatin heritably changed in its expressibility. This Danio rerio (Zebrafish) protein is E3 ubiquitin-protein ligase RING2 (rnf2).